The sequence spans 144 residues: Large ribosomal subunit protein uL15 (144 aa).

The segment at 1 to 48 (MQLNNLKPAAGSKHAKRRVGRGIGSGLGKTAGRGHKGQKSRSGGFHKV) is disordered. Gly residues predominate over residues 21–31 (RGIGSGLGKTA).

Belongs to the universal ribosomal protein uL15 family. As to quaternary structure, part of the 50S ribosomal subunit.

Its function is as follows. Binds to the 23S rRNA. This chain is Large ribosomal subunit protein uL15, found in Cupriavidus taiwanensis (strain DSM 17343 / BCRC 17206 / CCUG 44338 / CIP 107171 / LMG 19424 / R1) (Ralstonia taiwanensis (strain LMG 19424)).